Here is a 357-residue protein sequence, read N- to C-terminus: Aspartate carbamoyltransferase catalytic subunit (357 aa).

Residues M1 to P15 show a composition bias toward polar residues. Positions M1–F21 are disordered. Positions 97 and 98 each coordinate carbamoyl phosphate. K125 lines the L-aspartate pocket. Carbamoyl phosphate-binding residues include R147, H177, and Q180. L-aspartate-binding residues include R211 and R266. Residues G307 and P308 each contribute to the carbamoyl phosphate site.

The protein belongs to the aspartate/ornithine carbamoyltransferase superfamily. ATCase family. As to quaternary structure, heterododecamer (2C3:3R2) of six catalytic PyrB chains organized as two trimers (C3), and six regulatory PyrI chains organized as three dimers (R2).

It catalyses the reaction carbamoyl phosphate + L-aspartate = N-carbamoyl-L-aspartate + phosphate + H(+). It functions in the pathway pyrimidine metabolism; UMP biosynthesis via de novo pathway; (S)-dihydroorotate from bicarbonate: step 2/3. Catalyzes the condensation of carbamoyl phosphate and aspartate to form carbamoyl aspartate and inorganic phosphate, the committed step in the de novo pyrimidine nucleotide biosynthesis pathway. The sequence is that of Aspartate carbamoyltransferase catalytic subunit from Psychrobacter cryohalolentis (strain ATCC BAA-1226 / DSM 17306 / VKM B-2378 / K5).